The chain runs to 632 residues: Nucleoside triphosphatase I (632 aa).

A Helicase ATP-binding domain is found at 42 to 204 (FLGLDKMHSL…VMLVNLLRPK (163 aa)). 55–62 (HETGVGKT) contacts ATP. A DEXH box motif is present at residues 141–144 (DECH). Residues 367–532 (KFTDVCLRIL…EFTQLFKVFK (166 aa)) form the Helicase C-terminal domain. The segment at 457–524 (DIFILDMTWN…DIIRTKSKEF (68 aa)) is binding to the cap-specific mRNA (nucleoside-2'-O-)-methyltransferase.

Belongs to the helicase family. NPH I subfamily. Monomer. Interacts (via C-terminus) with RAP94 (via N-terminus). Interacts with the cap-specific mRNA (nucleoside-2'-O-)-methyltransferase.

The protein resides in the virion. The enzyme catalyses a ribonucleoside 5'-triphosphate + H2O = a ribonucleoside 5'-diphosphate + phosphate + H(+). In terms of biological role, DNA-dependent ATPase required for providing the needed energy to achieve the termination of early transcripts. Acts in concert with the RAP94 subunit of the virion RNA polymerase and the capping enzyme/VTF to catalyze release of UUUUUNU-containing nascent RNA from the elongation complex. NPH-I must bind ssDNA in order to exhibit ATPase activity. The polypeptide is Nucleoside triphosphatase I (NPH1) (Myxoma virus (strain Lausanne) (MYXV)).